Here is a 367-residue protein sequence, read N- to C-terminus: 2-aminoethylphosphonate--pyruvate transaminase (367 aa).

Lys194 is modified (N6-(pyridoxal phosphate)lysine).

This sequence belongs to the class-V pyridoxal-phosphate-dependent aminotransferase family. PhnW subfamily. In terms of assembly, homodimer. Pyridoxal 5'-phosphate serves as cofactor.

It catalyses the reaction (2-aminoethyl)phosphonate + pyruvate = phosphonoacetaldehyde + L-alanine. In terms of biological role, involved in phosphonate degradation. This chain is 2-aminoethylphosphonate--pyruvate transaminase, found in Salmonella gallinarum (strain 287/91 / NCTC 13346).